Here is a 344-residue protein sequence, read N- to C-terminus: Methionine import ATP-binding protein MetN 1 (344 aa).

Residues 2 to 241 (IELRNLSQRF…PHHEVTRALI (240 aa)) form the ABC transporter domain. An ATP-binding site is contributed by 38 to 45 (GRSGAGKS).

This sequence belongs to the ABC transporter superfamily. Methionine importer (TC 3.A.1.24) family. As to quaternary structure, the complex is composed of two ATP-binding proteins (MetN), two transmembrane proteins (MetI) and a solute-binding protein (MetQ).

The protein localises to the cell inner membrane. It catalyses the reaction L-methionine(out) + ATP + H2O = L-methionine(in) + ADP + phosphate + H(+). It carries out the reaction D-methionine(out) + ATP + H2O = D-methionine(in) + ADP + phosphate + H(+). In terms of biological role, part of the ABC transporter complex MetNIQ involved in methionine import. Responsible for energy coupling to the transport system. The sequence is that of Methionine import ATP-binding protein MetN 1 from Burkholderia orbicola (strain AU 1054).